A 234-amino-acid chain; its full sequence is NAD-reducing hydrogenase HoxS subunit gamma (234 aa).

Residues 2 to 77 (SIQITIDGKT…GLNVEVNDPE (76 aa)) enclose the 2Fe-2S ferredoxin-type domain. Residues cysteine 35, cysteine 46, cysteine 49, and cysteine 61 each coordinate [2Fe-2S] cluster. Residues 77-116 (ELVDMRKALVEFLFAEGNHNCPSCEKSGRCQLQAVGYEVD) enclose the 4Fe-4S His(Cys)3-ligated-type domain. [4Fe-4S] cluster-binding residues include histidine 95, cysteine 97, cysteine 100, cysteine 106, cysteine 145, cysteine 148, cysteine 151, and cysteine 198.

The protein belongs to the complex I 75 kDa subunit family. Tetramer of an alpha and a gamma subunits (flavin-containing dimer), and a delta and a nickel-containing beta subunits (hydrogenase dimer). Requires [2Fe-2S] cluster as cofactor. The cofactor is [4Fe-4S] cluster.

The protein localises to the cytoplasm. The enzyme catalyses H2 + NAD(+) = NADH + H(+). Functionally, subunits alpha and gamma of HoxS constitute an NADH--oxidoreductase. The sequence is that of NAD-reducing hydrogenase HoxS subunit gamma (hoxU) from Cupriavidus necator (strain ATCC 17699 / DSM 428 / KCTC 22496 / NCIMB 10442 / H16 / Stanier 337) (Ralstonia eutropha).